Here is a 335-residue protein sequence, read N- to C-terminus: Autophagy-related protein 21 (335 aa).

2 WD repeats span residues 165–205 and 210–249; these read CHSS…LVTE and YIPASIVSISFHPVEPFLACASENGTIHVFKISKQPSDPN.

This sequence belongs to the WD repeat PROPPIN family.

It localises to the cytoplasm. Its subcellular location is the golgi apparatus. The protein localises to the golgi stack membrane. The protein resides in the vacuole membrane. It is found in the preautophagosomal structure membrane. Its function is as follows. Required for cytoplasm to vacuole transport (Cvt) vesicles formation and autophagy. Has a role in sporulation. The polypeptide is Autophagy-related protein 21 (mug179) (Schizosaccharomyces pombe (strain 972 / ATCC 24843) (Fission yeast)).